Reading from the N-terminus, the 117-residue chain is Gamma-aminobutyric acid receptor-associated protein-like 1 (117 aa).

G116 carries the Phosphatidylethanolamine amidated glycine; alternate lipid modification. Residue G116 is the site of Phosphatidylserine amidated glycine; alternate attachment. A propeptide (removed in mature form) is located at residue K117.

Belongs to the ATG8 family. In terms of assembly, interacts with ATG13, OPRK1, RB1CC1 and ULK1. Interacts with TP53INP1 and TP53INP2. Directly interacts with SQSTM1. Interacts with ATG3, ATG7 and MAP15. Interacts with TECPR2. Interacts with TBC1D5. Interacts with MAPK15. Interacts with TRIM5. Interacts with MEFV and TRIM21. Interacts with WDFY3. Interacts with the reticulophagy receptor TEX264. Interacts with UBA5. Interacts with KBTBD6 and KBTBD7; the interaction is direct. Interacts with reticulophagy regulators RETREG1, RETREG2 and RETREG3. Interacts with IRGM. Interacts with DNM2. Interacts with NCOA4 (via C-terminus). Post-translationally, the precursor molecule is cleaved by ATG4 (ATG4A, ATG4B, ATG4C or ATG4D) to expose the glycine at the C-terminus and form the cytosolic form, GABARAPL1-I. The processed form is then activated by APG7L/ATG7, transferred to ATG3 and conjugated to phosphatidylethanolamine (PE) phospholipid to form the membrane-bound form, GABARAPL1-II. During non-canonical autophagy, the processed form is conjugated to phosphatidylserine (PS) phospholipid. ATG4 proteins also mediate the delipidation of PE-conjugated forms required for GABARAPL1 recycling when autophagosomes fuse with lysosomes. In addition, ATG4B and ATG4D mediate delipidation of ATG8 proteins conjugated to PS during non-canonical autophagy. ATG4B constitutes the major protein for proteolytic activation. ATG4D is the main enzyme for delipidation activity.

It localises to the cytoplasmic vesicle. It is found in the autophagosome. The protein localises to the cytoplasmic vesicle membrane. The protein resides in the cytoplasm. Its subcellular location is the cytoskeleton. It localises to the endoplasmic reticulum. It is found in the golgi apparatus. Its function is as follows. Ubiquitin-like modifier that increases cell-surface expression of kappa-type opioid receptor through facilitating anterograde intracellular trafficking of the receptor. Involved in formation of autophagosomal vacuoles. While LC3s are involved in elongation of the phagophore membrane, the GABARAP/GATE-16 subfamily is essential for a later stage in autophagosome maturation. Through its interaction with the reticulophagy receptor TEX264, participates in the remodeling of subdomains of the endoplasmic reticulum into autophagosomes upon nutrient stress, which then fuse with lysosomes for endoplasmic reticulum turnover. The protein is Gamma-aminobutyric acid receptor-associated protein-like 1 of Pongo abelii (Sumatran orangutan).